Here is a 130-residue protein sequence, read N- to C-terminus: Small ribosomal subunit protein uS11 (130 aa).

This sequence belongs to the universal ribosomal protein uS11 family. As to quaternary structure, part of the 30S ribosomal subunit. Interacts with proteins S7 and S18. Binds to IF-3.

Located on the platform of the 30S subunit, it bridges several disparate RNA helices of the 16S rRNA. Forms part of the Shine-Dalgarno cleft in the 70S ribosome. The sequence is that of Small ribosomal subunit protein uS11 from Campylobacter jejuni subsp. jejuni serotype O:6 (strain 81116 / NCTC 11828).